Consider the following 519-residue polypeptide: General transcription factor 3C polypeptide 5 (519 aa).

At Ala2 the chain carries N-acetylalanine. The segment at 465-519 is disordered; it reads ALFSSSAKADGGKEQLTYESGEDEEDEEEEEEEEEDFKPSDGSENEMETEILDYV. 2 stretches are compositionally biased toward acidic residues: residues 484-500 and 507-519; these read SGED…EEED and SENE…LDYV.

The protein belongs to the TFIIIC subunit 5 family. As to quaternary structure, part of the TFIIIC subcomplex TFIIIC2, consisting of six subunits, GTF3C1, GTF3C2, GTF3C3, GTF3C4, GTF3C5 and GTF3C6. Interacts with BRF1, GTF3C6 and TBP.

The protein localises to the nucleus. Its function is as follows. Involved in RNA polymerase III-mediated transcription. Integral, tightly associated component of the DNA-binding TFIIIC2 subcomplex that directly binds tRNA and virus-associated RNA promoters. In Homo sapiens (Human), this protein is General transcription factor 3C polypeptide 5 (GTF3C5).